Here is a 332-residue protein sequence, read N- to C-terminus: Beta-ketoacyl-[acyl-carrier-protein] synthase III 5 (332 aa).

Catalysis depends on residues Cys-111 and His-253. The interval 254-258 (QANAR) is ACP-binding. Asn-283 is an active-site residue.

The protein belongs to the thiolase-like superfamily. FabH family. In terms of assembly, homodimer.

The protein localises to the cytoplasm. The catalysed reaction is malonyl-[ACP] + acetyl-CoA + H(+) = 3-oxobutanoyl-[ACP] + CO2 + CoA. It functions in the pathway lipid metabolism; fatty acid biosynthesis. Functionally, catalyzes the condensation reaction of fatty acid synthesis by the addition to an acyl acceptor of two carbons from malonyl-ACP. Catalyzes the first condensation reaction which initiates fatty acid synthesis and may therefore play a role in governing the total rate of fatty acid production. Possesses both acetoacetyl-ACP synthase and acetyl transacylase activities. Its substrate specificity determines the biosynthesis of branched-chain and/or straight-chain of fatty acids. In Streptomyces coelicolor (strain ATCC BAA-471 / A3(2) / M145), this protein is Beta-ketoacyl-[acyl-carrier-protein] synthase III 5.